Here is a 116-residue protein sequence, read N- to C-terminus: Large ribosomal subunit protein eL22A (116 aa).

The protein belongs to the eukaryotic ribosomal protein eL22 family.

The chain is Large ribosomal subunit protein eL22A (rpl22) from Dictyostelium discoideum (Social amoeba).